A 651-amino-acid chain; its full sequence is Cysteine-rich receptor-like protein kinase 42 (651 aa).

Residues 1–28 form the signal peptide; the sequence is MRCLTKTRSFHYVIIFYSFFFLPFLSSS. Topologically, residues 29 to 251 are extracellular; sequence SDDQRTTVSG…HHKFHVLFNK (223 aa). Gnk2-homologous domains lie at 35 to 135 and 137 to 236; these read TVSG…TYEF and DESV…DHKF. Residues N79 and N151 are each glycosylated (N-linked (GlcNAc...) asparagine). Residues 252–272 traverse the membrane as a helical segment; the sequence is GVIVAIVLTTSAFVMLILLAT. Residues 273–651 lie on the Cytoplasmic side of the membrane; the sequence is YVIMTKVSKT…SSESSTTRTI (379 aa). In terms of domain architecture, Protein kinase spans 315 to 604; it reads FSHKKMLGQG…IPSPTSPPFL (290 aa). Residues 321–329 and K343 each bind ATP; that span reads LGQGGNGTV. Y388 is subject to Phosphotyrosine. Catalysis depends on D440, which acts as the Proton acceptor. S444 and S473 each carry phosphoserine. Phosphothreonine is present on residues T474 and T479. Y487 bears the Phosphotyrosine mark.

The protein belongs to the protein kinase superfamily. Ser/Thr protein kinase family. CRK subfamily.

The protein localises to the membrane. The catalysed reaction is L-seryl-[protein] + ATP = O-phospho-L-seryl-[protein] + ADP + H(+). It catalyses the reaction L-threonyl-[protein] + ATP = O-phospho-L-threonyl-[protein] + ADP + H(+). The polypeptide is Cysteine-rich receptor-like protein kinase 42 (CRK42) (Arabidopsis thaliana (Mouse-ear cress)).